Reading from the N-terminus, the 179-residue chain is Adenine phosphoribosyltransferase (179 aa).

It belongs to the purine/pyrimidine phosphoribosyltransferase family. Homodimer.

It localises to the cytoplasm. The enzyme catalyses AMP + diphosphate = 5-phospho-alpha-D-ribose 1-diphosphate + adenine. Its pathway is purine metabolism; AMP biosynthesis via salvage pathway; AMP from adenine: step 1/1. Its function is as follows. Catalyzes a salvage reaction resulting in the formation of AMP, that is energically less costly than de novo synthesis. The sequence is that of Adenine phosphoribosyltransferase from Actinobacillus pleuropneumoniae serotype 5b (strain L20).